An 82-amino-acid polypeptide reads, in one-letter code: Small ribosomal subunit protein eS27 (82 aa).

4 residues coordinate Zn(2+): C37, C40, C56, and C59.

This sequence belongs to the eukaryotic ribosomal protein eS27 family. As to quaternary structure, component of the small ribosomal subunit. Mature ribosomes consist of a small (40S) and a large (60S) subunit. The 40S subunit contains about 32 different proteins and 1 molecule of RNA (18S). The 60S subunit contains 45 different proteins and 3 molecules of RNA (25S, 5.8S and 5S). Requires Zn(2+) as cofactor.

The protein localises to the cytoplasm. In terms of biological role, component of the ribosome, a large ribonucleoprotein complex responsible for the synthesis of proteins in the cell. The small ribosomal subunit (SSU) binds messenger RNAs (mRNAs) and translates the encoded message by selecting cognate aminoacyl-transfer RNA (tRNA) molecules. The large subunit (LSU) contains the ribosomal catalytic site termed the peptidyl transferase center (PTC), which catalyzes the formation of peptide bonds, thereby polymerizing the amino acids delivered by tRNAs into a polypeptide chain. The nascent polypeptides leave the ribosome through a tunnel in the LSU and interact with protein factors that function in enzymatic processing, targeting, and the membrane insertion of nascent chains at the exit of the ribosomal tunnel. The polypeptide is Small ribosomal subunit protein eS27 (RPS27) (Candida albicans (strain SC5314 / ATCC MYA-2876) (Yeast)).